The chain runs to 325 residues: GPI-linked NAD(P)(+)--arginine ADP-ribosyltransferase 1 (325 aa).

Positions 1 to 22 (MKIPAMMSLLLVSVGLRDGVQV) are cleaved as a signal peptide. Intrachain disulfides connect C53-C272 and C169-C219. A glycan (N-linked (GlcNAc...) asparagine) is linked at N65. A TR mART core domain is found at 73 to 268 (KVYADGWAQA…IYLRALGKRS (196 aa)). NAD(+) is bound by residues Y117 and R174. Residues R174 and S197 contribute to the active site. S228 is an NAD(+) binding site. The active site involves E235. The N-linked (GlcNAc...) asparagine glycan is linked to N248. S290 is lipidated: GPI-anchor amidated serine. A propeptide spans 291–325 (APGSISASCSLLLLLLFLVLSALPENPGLQQLTRC) (removed in mature form).

It belongs to the Arg-specific ADP-ribosyltransferase family. In terms of tissue distribution, abundantly expressed in cardiac and skeletal muscle. Low levels also found in lung.

It is found in the sarcoplasmic reticulum membrane. The enzyme catalyses L-arginyl-[protein] + NAD(+) = N(omega)-(ADP-D-ribosyl)-L-arginyl-[protein] + nicotinamide + H(+). In terms of biological role, has ADP-ribosyltransferase activity toward GLP1R. The sequence is that of GPI-linked NAD(P)(+)--arginine ADP-ribosyltransferase 1 (Art1) from Mus musculus (Mouse).